A 148-amino-acid polypeptide reads, in one-letter code: Large ribosomal subunit protein uL15 (148 aa).

The disordered stretch occupies residues 1–57; that stretch reads MRLNDVKPQKGSKKRRRRVGRGISAGQGASAGLGMRGQKSRSGSGTRPGFEGGQQPL. The segment covering 10 to 20 has biased composition (basic residues); that stretch reads KGSKKRRRRVG. Positions 23 to 35 are enriched in gly residues; sequence ISAGQGASAGLGM.

The protein belongs to the universal ribosomal protein uL15 family. In terms of assembly, part of the 50S ribosomal subunit.

In terms of biological role, binds to the 23S rRNA. In Nostoc sp. (strain PCC 7120 / SAG 25.82 / UTEX 2576), this protein is Large ribosomal subunit protein uL15.